The primary structure comprises 1029 residues: FYVE, RhoGEF and PH domain-containing protein tag-77 (1029 aa).

Composition is skewed to basic and acidic residues over residues 1–12 (MKYDMNHRKNSD) and 20–39 (TVKE…DNRF). 3 disordered regions span residues 1-155 (MKYD…ATSE), 185-254 (VPRM…ERKT), and 279-370 (NNGV…EKDD). Residues 42–56 (QPPPPPSPRRAPPPP) show a composition bias toward pro residues. Low complexity-rich tracts occupy residues 76–85 (PPSSSESSEN) and 122–133 (SSSTSDVSSQNS). Composition is skewed to polar residues over residues 141–155 (SCTT…ATSE) and 200–211 (PISQVSTLSQVS). Residues 212 to 227 (DEFDEGDTSASDEESM) show a composition bias toward acidic residues. Residues 316–334 (SPTSGMSSSSTDDFSRITS) are compositionally biased toward low complexity. The span at 335-347 (MTSDRSSILTSHS) shows a compositional bias: polar residues. Positions 375-572 (KLHYAAVEFL…ENVTQAVNQK (198 aa)) constitute a DH domain. Residues 593 to 696 (NVLEPGRVLI…WTDDLTKAQY (104 aa)) form the PH domain. Cysteine 810, cysteine 823, cysteine 826, cysteine 831, cysteine 834, cysteine 851, and cysteine 854 together coordinate Zn(2+). The FYVE-type; degenerate zinc-finger motif lies at 810–859 (CSTEFNIINRRHHCRDCGWLICKFCKGQAPLSKYDFTKQNVCSECFDRHY).

It localises to the cytoplasm. The protein localises to the cytoskeleton. Activates cdc-42, a member of the Ras-like family of Rho- and Rac proteins, by exchanging bound GDP for free GTP. May play a role in regulating the actin cytoskeleton and cell shape. Required for normal lifespan. This Caenorhabditis elegans protein is FYVE, RhoGEF and PH domain-containing protein tag-77.